The primary structure comprises 183 residues: DELTA-miturgitoxin-Cp1a (183 aa).

The N-terminal stretch at 1-20 (MKFSLFFSVFFLAVLHACLS) is a signal peptide. Residues 21-47 (ESEIDLEDEEHFMSSDSFLSEIQDESR) constitute a propeptide that is removed on maturation. Residues 44-47 (DESR) carry the Processing quadruplet motif motif. 8 cysteine pairs are disulfide-bonded: cysteine 51–cysteine 66, cysteine 58–cysteine 75, cysteine 65–cysteine 88, cysteine 77–cysteine 86, cysteine 115–cysteine 130, cysteine 122–cysteine 139, cysteine 129–cysteine 157, and cysteine 141–cysteine 155. Domain repeat units lie at residues 51-77 (CIER…KCTC) and 115-141 (CVPK…QCKC). The 2 X approximate repeats with cysteine pattern C-C-CC-C-C stretch occupies residues 51 to 141 (CIERNKECTN…GGIFKYQCKC (91 aa)). Positions 164–177 (QAIEGALRIAKKLI) are predicted alpha-helix. Tryptophan 181 is modified (tryptophan amide).

It belongs to the neurotoxin 19 (CSTX) family. Double-CSTX subfamily. Cleavage of the propeptide depends on the processing quadruplet motif (XXXR, with at least one of X being E). As to expression, expressed by the venom gland.

It is found in the secreted. It localises to the target cell membrane. In terms of biological role, spider venom toxin that exhibits cytolytic activity by forming an alpha-helix across the membrane. Lethal to insect larvae. Causes instant paralysis and death in the larvae of the flesh fly (S.carnaria) at doses of 20 ug/g, at doses of less than 10 ug/g causes reversible paralysis. Has cytolytic activity against insect Sf9 cells. Causes stable and irreversible depolarization of fly muscle fibers, leading to contracture at higher toxin concentrations. Destabilizes membranes. The protein is DELTA-miturgitoxin-Cp1a of Cheiracanthium punctorium (Yellow sac spider).